The following is a 459-amino-acid chain: uncharacterized protein (459 aa).

His-79 lines the Zn(2+) pocket. Glu-82 functions as the Proton acceptor in the catalytic mechanism. His-83 and Glu-159 together coordinate Zn(2+).

The protein belongs to the peptidase M16 family. Zn(2+) serves as cofactor.

This is an uncharacterized protein from Streptomyces coelicolor (strain ATCC BAA-471 / A3(2) / M145).